We begin with the raw amino-acid sequence, 488 residues long: Probable malate:quinone oxidoreductase (488 aa).

This sequence belongs to the MQO family. It depends on FAD as a cofactor.

The catalysed reaction is (S)-malate + a quinone = a quinol + oxaloacetate. Its pathway is carbohydrate metabolism; tricarboxylic acid cycle; oxaloacetate from (S)-malate (quinone route): step 1/1. This chain is Probable malate:quinone oxidoreductase, found in Neisseria meningitidis serogroup A / serotype 4A (strain DSM 15465 / Z2491).